A 258-amino-acid polypeptide reads, in one-letter code: Alpha-fibrinogenase albofibrase (258 aa).

The N-terminal stretch at 1 to 18 (MVLIRVLANLLILQLSYA) is a signal peptide. A propeptide spanning residues 19–24 (QKSSEL) is cleaved from the precursor. The Peptidase S1 domain occupies 25-249 (VVGGDECNIN…YNDWIQSIIA (225 aa)). 6 disulfides stabilise this stretch: Cys-31/Cys-163, Cys-50/Cys-66, Cys-98/Cys-256, Cys-142/Cys-210, Cys-174/Cys-189, and Cys-200/Cys-225. N-linked (GlcNAc...) asparagine glycosylation is present at Asn-44. Residues His-65 and Asp-110 each act as charge relay system in the active site. Ser-204 (charge relay system) is an active-site residue.

The protein belongs to the peptidase S1 family. Snake venom subfamily. As to quaternary structure, monomer. As to expression, expressed by the venom gland.

Its subcellular location is the secreted. Functionally, the recombinant protein has fibrinogenolytic activity against the Aalpha chain (FGA) of fibrinogen. Activates plasminogen (PLG) (is 4-fold less active than urokinase). Has weak thrombin-like enzyme activity. Has enzymatic activity against a trypsin-like substrate (S-3013) and shows a weaker activity on an activated protein C substrate (S-3125). The sequence is that of Alpha-fibrinogenase albofibrase from Trimeresurus albolabris (White-lipped pit viper).